A 357-amino-acid chain; its full sequence is Peptide chain release factor 1 (357 aa).

N5-methylglutamine is present on Gln234.

Belongs to the prokaryotic/mitochondrial release factor family. Post-translationally, methylated by PrmC. Methylation increases the termination efficiency of RF1.

Its subcellular location is the cytoplasm. Its function is as follows. Peptide chain release factor 1 directs the termination of translation in response to the peptide chain termination codons UAG and UAA. This chain is Peptide chain release factor 1 (prfA), found in Lactococcus lactis subsp. lactis (strain IL1403) (Streptococcus lactis).